Consider the following 207-residue polypeptide: Large ribosomal subunit protein uL3 (207 aa).

Belongs to the universal ribosomal protein uL3 family. Part of the 50S ribosomal subunit. Forms a cluster with proteins L14 and L19.

Functionally, one of the primary rRNA binding proteins, it binds directly near the 3'-end of the 23S rRNA, where it nucleates assembly of the 50S subunit. The chain is Large ribosomal subunit protein uL3 from Thermotoga maritima (strain ATCC 43589 / DSM 3109 / JCM 10099 / NBRC 100826 / MSB8).